A 592-amino-acid polypeptide reads, in one-letter code: Anaphase-promoting complex subunit 8 (592 aa).

TPR repeat units follow at residues 66-99 (EYYK…QLPI), 160-193 (QQQQ…NKKD), 291-324 (TYIL…EPNR), 359-392 (PETC…NDRY), 393-426 (LSAW…NPRD), 428-460 (RAWY…RPYD), 461-494 (PRMW…YDRE), and 496-528 (VAIN…CDQE). The tract at residues 129–166 (QQQAQQQAQQAQQESQQNDKNNDTNNNNKTDQQQQQQQ) is disordered.

The protein belongs to the APC8/CDC23 family. The APC/C is composed of at least 13 subunits that stay tightly associated throughout the cell cycle: anapc1, anapc2, anapc3, anapc4, anapc5, anapc6, anapc7, anapc8, anapc10, anapc11, cdc20, cdc26 and cdh1.

The protein localises to the nucleus. Its pathway is protein modification; protein ubiquitination. In terms of biological role, component of the anaphase promoting complex/cyclosome (APC/C), a cell cycle-regulated E3 ubiquitin-protein ligase complex that controls progression through mitosis and the G1 phase of the cell cycle. The polypeptide is Anaphase-promoting complex subunit 8 (anapc8) (Dictyostelium discoideum (Social amoeba)).